A 254-amino-acid chain; its full sequence is Imidazole glycerol phosphate synthase subunit HisF (254 aa).

Catalysis depends on residues D14 and D133.

Belongs to the HisA/HisF family. As to quaternary structure, heterodimer of HisH and HisF.

The protein localises to the cytoplasm. It carries out the reaction 5-[(5-phospho-1-deoxy-D-ribulos-1-ylimino)methylamino]-1-(5-phospho-beta-D-ribosyl)imidazole-4-carboxamide + L-glutamine = D-erythro-1-(imidazol-4-yl)glycerol 3-phosphate + 5-amino-1-(5-phospho-beta-D-ribosyl)imidazole-4-carboxamide + L-glutamate + H(+). It functions in the pathway amino-acid biosynthesis; L-histidine biosynthesis; L-histidine from 5-phospho-alpha-D-ribose 1-diphosphate: step 5/9. In terms of biological role, IGPS catalyzes the conversion of PRFAR and glutamine to IGP, AICAR and glutamate. The HisF subunit catalyzes the cyclization activity that produces IGP and AICAR from PRFAR using the ammonia provided by the HisH subunit. The polypeptide is Imidazole glycerol phosphate synthase subunit HisF (Nitratiruptor sp. (strain SB155-2)).